The following is a 24-amino-acid chain: Coenzyme PQQ synthesis protein A (24 aa).

The segment at residues 16–20 (EITMY) is a cross-link (pyrroloquinoline quinone (Glu-Tyr)).

Belongs to the PqqA family.

Its pathway is cofactor biosynthesis; pyrroloquinoline quinone biosynthesis. Its function is as follows. Required for coenzyme pyrroloquinoline quinone (PQQ) biosynthesis. PQQ is probably formed by cross-linking a specific glutamate to a specific tyrosine residue and excising these residues from the peptide. This Cupriavidus taiwanensis (strain DSM 17343 / BCRC 17206 / CCUG 44338 / CIP 107171 / LMG 19424 / R1) (Ralstonia taiwanensis (strain LMG 19424)) protein is Coenzyme PQQ synthesis protein A.